Here is a 250-residue protein sequence, read N- to C-terminus: Golgi SNAP receptor complex member 1 (250 aa).

At alanine 2 the chain carries N-acetylalanine. Over 2 to 229 the chain is Cytoplasmic; the sequence is AAGTSNYWED…QRINLRKRRD (228 aa). Residues 9–30 are a coiled coil; sequence WEDLRKQARQLENELDLKLVSF. Residues 37–59 form a disordered region; it reads YSHSSARDGGRDRYSSDTTPLLN. Over residues 41-51 the composition is skewed to basic and acidic residues; the sequence is SARDGGRDRYS. Positions 68–95 form a coiled coil; sequence ETMAIEIEQLLARLTGVNDKMAEYTHSA. Serine 141 carries the phosphoserine modification. Residues 230–250 traverse the membrane as a helical; Anchor for type IV membrane protein segment; that stretch reads SLILGGVIGICTILLLLYAFH.

The protein belongs to the GOSR1 family. In terms of assembly, component of several multiprotein Golgi SNARE complexes. Identified in a SNARE complex with BET1, STX5 and YKT6, in a SNARE complex with BET1L, STX5 and YKT6, in a SNARE complex with STX5, GOSR2, SEC22B and BET1, and in complex with STX5 and COG3. Interacts with GABARAPL2. Interacts with the 34 kDa STX5 isoform.

It is found in the golgi apparatus membrane. Its function is as follows. Involved in transport from the ER to the Golgi apparatus as well as in intra-Golgi transport. It belongs to a super-family of proteins called t-SNAREs or soluble NSF (N-ethylmaleimide-sensitive factor) attachment protein receptor. May play a protective role against hydrogen peroxide induced cytotoxicity under glutathione depleted conditions in neuronal cells by regulating the intracellular ROS levels via inhibition of p38 MAPK (MAPK11, MAPK12, MAPK13 and MAPK14). Participates in docking and fusion stage of ER to cis-Golgi transport. Plays an important physiological role in VLDL-transport vesicle-Golgi fusion and thus in VLDL delivery to the hepatic cis-Golgi. The polypeptide is Golgi SNAP receptor complex member 1 (Gosr1) (Rattus norvegicus (Rat)).